The primary structure comprises 385 residues: MSKGASAPQQQSAFKQLYTELFNNEGDFSKVSSNLKKPLKCYVKESYPHFLVTDGYFFVAPYFTKEAVNEFHAKFPNVNIVDLTDKVIVINNWSLELRRVNSAEVFTSYANLEARLIVHSFKPNLQERLNPTRYPVNLFRDDEFKTTIQHFRHTALQAAINKTVKGDNLVDISKVADAAGKKGKVDAGIVKASASKGDEFSDFSFKEGNTATLKIADIFVQEKGKDALNKAADHTDGAKVKGGAKGKGKAAAKAAKGKKLSAKKGDSSAADVRKSVDKIVKYTPSKGSRKDTPQKSQAPAAGKSSAKKGGKKAVPSAPSPSGKKSALTTDKMTMAQFVKYLDWHEKKKGGKVSSGGKVLGKRSAGKASATSGKASKASKKTAAKK.

Disordered regions lie at residues 231 to 329 (AADH…ALTT) and 343 to 385 (WHEK…AAKK). Positions 242–262 (GGAKGKGKAAAKAAKGKKLSA) are enriched in basic residues. Residues 263 to 280 (KKGDSSAADVRKSVDKIV) are compositionally biased toward basic and acidic residues. Low complexity-rich tracts occupy residues 295-304 (KSQAPAAGKS), 312-326 (KAVP…KKSA), and 365-375 (GKASATSGKAS). Over residues 376–385 (KASKKTAAKK) the composition is skewed to basic residues.

Heterodimer of an alpha and a beta subunit.

It is found in the nucleus. The protein resides in the chromosome. It localises to the telomere. In terms of biological role, may function as protective capping of the single-stranded telomeric overhang. May also participate in telomere length regulation during DNA replication. Binds specifically to the T4G4-containing extension on the 3'strand and protects this region of the telomere from nuclease digestion and chemical modification. This chain is Telomere-binding protein subunit beta (MAC-41A), found in Sterkiella nova (Ciliate).